Reading from the N-terminus, the 359-residue chain is Salicylate carboxymethyltransferase (359 aa).

S-adenosyl-L-methionine is bound at residue Y18. Residues Y18, 21–25 (NSFIQ), and Q25 contribute to the substrate site. S-adenosyl-L-methionine is bound by residues G59, 59 to 60 (GC), 59 to 61 (GCS), N65, 96 to 99 (LNDL), D98, 129 to 131 (SFY), and 146 to 148 (SYS). Substrate is bound by residues 147-151 (YSLMW) and W151. Mg(2+) contacts are provided by N162, D248, F250, and N251. Y255 lines the substrate pocket.

The protein belongs to the methyltransferase superfamily. SABATH family.

It catalyses the reaction salicylate + S-adenosyl-L-methionine = methyl salicylate + S-adenosyl-L-homocysteine. Catalyzes the methylation of the free carboxyl end of the plant hormone salicylic acid (SA). Converts SA to SA methyl ester (MSA). The volatile compound MSA is hypothesized to act as an airborne signal that triggers defense responses in uninfected plants. MSA is an important chemoattractant for moth pollinated flowering plants. This Clarkia breweri (Fairy fans) protein is Salicylate carboxymethyltransferase (SAMT).